The chain runs to 479 residues: Adenylate kinase 8 (479 aa).

Adenylate kinase regions lie at residues 58–258 and 269–471; these read PRIV…TYVQ and PRVL…SGII. ATP is bound at residue 67-72; the sequence is ASGKTT. The tract at residues 87–113 is NMP 1; that stretch reads TLENLILNEFSYTATEARRLYLQRKTV. Residues 140–143, Gln-147, and Arg-203 contribute to the AMP site; that span reads GIPE. The LID 1 stretch occupies residues 177 to 206; it reads GKRIDPQTGEIYHTTFDWPPESEIQNRLMV. 278–283 provides a ligand contact to ATP; it reads GSGKSL. An NMP 2 region spans residues 298–327; the sequence is CCGQLLKEAVADRTTFGELIQPFFEKEMAV. Residues 325–327, 354–357, and Gln-361 each bind AMP; these read MAV and GVPR. The tract at residues 391–424 is LID 2; that stretch reads LRRIDPVTGERYHLMYKPPPTMEIQARLLQNPKD. Arg-392 contacts ATP.

It belongs to the adenylate kinase family. Interacts with CFAP45 and CFAP52; CFAP45 and AK8 dimerization may create a cavity at the interface of the dimer that can accommodate AMP. As to expression, expressed in respiratory cells (at protein level).

Its subcellular location is the cytoplasm. The protein resides in the cytosol. It localises to the cytoskeleton. It is found in the cilium axoneme. The enzyme catalyses AMP + ATP = 2 ADP. It carries out the reaction a 2'-deoxyribonucleoside 5'-diphosphate + ATP = a 2'-deoxyribonucleoside 5'-triphosphate + ADP. It catalyses the reaction a ribonucleoside 5'-diphosphate + ATP = a ribonucleoside 5'-triphosphate + ADP. Its function is as follows. Nucleoside monophosphate (NMP) kinase that catalyzes the reversible transfer of the terminal phosphate group between nucleoside triphosphates and monophosphates. Has highest activity toward AMP, and weaker activity toward dAMP, CMP and dCMP. Also displays broad nucleoside diphosphate kinase activity. In Homo sapiens (Human), this protein is Adenylate kinase 8 (AK8).